Reading from the N-terminus, the 175-residue chain is MANITVFYNEDFGGKQVDLKPDEYKRDKLEALGIENNTISSVKVPPGVKAILYKNDDFTGDQIEVVANAEELGPLNNNVSSIKVMSVPVQPRARFFYKEQFDGKEVDLPPGQYTQAELERYGIDNNTISSVKPEGLKVVLFKNDNFSAGDTLSVTSNAPSLGAMNNNTSSIRITP.

2 Beta/gamma crystallin 'Greek key' domains span residues alanine 2 to proline 46 and valine 48 to serine 86. The segment at valine 87–glutamine 90 is connecting peptide. 2 Beta/gamma crystallin 'Greek key' domains span residues proline 91–glycine 135 and leucine 136–proline 175.

This sequence belongs to the beta/gamma-crystallin family.

Its subcellular location is the spore. The protein resides in the perispore. The protein is Development-specific protein S homolog (ops) of Myxococcus xanthus.